A 431-amino-acid chain; its full sequence is UDP-N-acetylglucosamine--N-acetylmuramyl-(pentapeptide) pyrophosphoryl-undecaprenol N-acetylglucosamine transferase (431 aa).

UDP-N-acetyl-alpha-D-glucosamine-binding positions include 29 to 31, N141, R177, S205, I258, and Q303; that span reads TGG. The segment at 370–431 is disordered; that stretch reads AGSGDGQPPA…NPGASAGGAP (62 aa). The segment covering 395–420 has biased composition (polar residues); that stretch reads KQGSMQTSVNGDRSAQLIATNPQSRL.

It belongs to the glycosyltransferase 28 family. MurG subfamily.

The protein resides in the cell inner membrane. The enzyme catalyses di-trans,octa-cis-undecaprenyl diphospho-N-acetyl-alpha-D-muramoyl-L-alanyl-D-glutamyl-meso-2,6-diaminopimeloyl-D-alanyl-D-alanine + UDP-N-acetyl-alpha-D-glucosamine = di-trans,octa-cis-undecaprenyl diphospho-[N-acetyl-alpha-D-glucosaminyl-(1-&gt;4)]-N-acetyl-alpha-D-muramoyl-L-alanyl-D-glutamyl-meso-2,6-diaminopimeloyl-D-alanyl-D-alanine + UDP + H(+). It functions in the pathway cell wall biogenesis; peptidoglycan biosynthesis. Its function is as follows. Cell wall formation. Catalyzes the transfer of a GlcNAc subunit on undecaprenyl-pyrophosphoryl-MurNAc-pentapeptide (lipid intermediate I) to form undecaprenyl-pyrophosphoryl-MurNAc-(pentapeptide)GlcNAc (lipid intermediate II). This chain is UDP-N-acetylglucosamine--N-acetylmuramyl-(pentapeptide) pyrophosphoryl-undecaprenol N-acetylglucosamine transferase, found in Xanthomonas euvesicatoria pv. vesicatoria (strain 85-10) (Xanthomonas campestris pv. vesicatoria).